We begin with the raw amino-acid sequence, 1322 residues long: MSRRKQAKPQHFQSDPEVASLPRRDGDTEKGQPSRPTKSKDAHVCGRCCAEFFELSDLLLHKKSCTKNQLVLIVNESPASPAKTFPPGPSLNDPDDQMKDAANKADQEDCSDLSEPKGLDREESMEVEVPVATTTTTTTGGSGGSGGSTLSGVTNITTPSCHSGCSSGTSAITTSLPQLGDLTTLGNFSVINSNVIIENLQSTKVAVAQFSQEARCGGASGGKLLISTLMEQLLALQQQQIHQLQLIEQIRHQILLLASQSADLPAAPSIPSQGTLRTSANPLTTLSSHLSQQLAVAAGLAQSLASQSANISGVKQLPHVQLPQSSSGTSIVPPSGGTSPNMSIVTAAVPTPSSEKVASNAGASHVSSPAVSASSSPAFAISSLLSPESNPLLPQPTPANAVFPTPLPNIATTAEDLNSLSALAQQRKSKPPNVTAFEAKSTSDEAFFKHKCRFCAKVFGSDSALQIHLRSHTGERPFKCNICGNRFSTKGNLKVHFQRHKEKYPHIQMNPYPVPEHLDNVPTSTGIPYGMSIPSEKPVTSWLDTKPVLPTLTTSVGLPLPPTLPSLTPFIKTEEPAPIPISHSAASPQGSVKSDSGAPDLATRNPSGVPEEVEGSAVPPFGGKGEESNMASSAVPTAGNSTLNSPVADGGPGGTTFTNPLLPLMSEQFKAKFPFGGLLDSAQASETSKLQQLVENIDKKATDPNECIICHRVLSCQSALKMHYRTHTGERPFKCKICGRAFTTKGNLKTHYSVHRAMPPLRVQHSCPICQKKFTNAVVLQQHIRMHMGGQIPNTPVPDNYPESMESDTGSFDEKNFDDLDNFSDENMEECPEGSIPDTPKSADASQDSLSSSPLPLEMSSIAALENQMKMINAGLAEQLQASLKSVENGSMEGDVLTNDSSSVGGDMESQSAGSPAISESTSSMQALSPSNSTQEFHKSPGMEEKPQRVGPGEFANGLSPTPVNGGALDLTSSHAEKIIKEDSLGILFPFRDRGKFKNTACDICGKTFACQSALDIHYRSHTKERPFICTVCNRGFSTKGNLKQHMLTHQMRDLPSQLFEPSSNLGPNQNSAVIPANSLSSLIKTEVNGFVHVSPQDSKDAPTSHVPQGPLSSSATSPVLLPALPRRTPKQHYCNTCGKTFSSSSALQIHERTHTGEKPFACTICGRAFTTKGNLKVHMGTHMWNSTPARRGRRLSVDGPMTFLGGNPVKFPEMFQKDLAARSGSGDPSSFWNQYTAALSNGLAMKANEISVIQNGGIPPIPGSLGSGSSPISGLTGNVEKLGNSEPSAPLAGLEKMASSENGTNFRFTRFVEDSKEIVTS.

The tract at residues 1-41 (MSRRKQAKPQHFQSDPEVASLPRRDGDTEKGQPSRPTKSKD) is disordered. Over residues 22-41 (PRRDGDTEKGQPSRPTKSKD) the composition is skewed to basic and acidic residues. A C2H2-type 1; atypical zinc finger spans residues 43–65 (HVCGRCCAEFFELSDLLLHKKSC). The tract at residues 78-128 (PASPAKTFPPGPSLNDPDDQMKDAANKADQEDCSDLSEPKGLDREESMEVE) is disordered. 2 stretches are compositionally biased toward basic and acidic residues: residues 96-107 (DQMKDAANKADQ) and 114-124 (SEPKGLDREES). A Glycyl lysine isopeptide (Lys-Gly) (interchain with G-Cter in SUMO2) cross-link involves residue K440. C2H2-type zinc fingers lie at residues 450 to 472 (HKCR…LRSH) and 478 to 500 (FKCN…FQRH). A disordered region spans residues 578-659 (PIPISHSAAS…GGPGGTTFTN (82 aa)). Over residues 584–594 (SAASPQGSVKS) the composition is skewed to polar residues. 3 positions are modified to phosphoserine: S591, S594, and S596. Over residues 629–645 (NMASSAVPTAGNSTLNS) the composition is skewed to polar residues. Glycyl lysine isopeptide (Lys-Gly) (interchain with G-Cter in SUMO2) cross-links involve residues K672, K689, and K700. 3 C2H2-type zinc fingers span residues 705-727 (NECI…YRTH), 733-755 (FKCK…YSVH), and 765-787 (HSCP…IRMH). Disordered stretches follow at residues 789–855 (GGQI…SSPL) and 891–961 (SMEG…GLSP). A compositionally biased stretch (acidic residues) spans 819–832 (DLDNFSDENMEECP). The span at 842-855 (SADASQDSLSSSPL) shows a compositional bias: low complexity. The span at 898–935 (TNDSSSVGGDMESQSAGSPAISESTSSMQALSPSNSTQ) shows a compositional bias: polar residues. The span at 936 to 948 (EFHKSPGMEEKPQ) shows a compositional bias: basic and acidic residues. The residue at position 940 (S940) is a Phosphoserine. Glycyl lysine isopeptide (Lys-Gly) (interchain with G-Cter in SUMO2) cross-links involve residues K946 and K981. 2 consecutive C2H2-type zinc fingers follow at residues 1000–1022 (TACD…YRSH) and 1028–1050 (FICT…MLTH). K1085 participates in a covalent cross-link: Glycyl lysine isopeptide (Lys-Gly) (interchain with G-Cter in SUMO2). The tract at residues 1094–1119 (VSPQDSKDAPTSHVPQGPLSSSATSP) is disordered. C2H2-type zinc fingers lie at residues 1133-1155 (HYCN…ERTH) and 1161-1183 (FACT…MGTH). Glycyl lysine isopeptide (Lys-Gly) (interchain with G-Cter in SUMO2) cross-links involve residues K1218, K1297, and K1317.

This sequence belongs to the sal C2H2-type zinc-finger protein family. In terms of assembly, may associate with NuRD histone deacetylase complex (HDAC). Interacts with components of HDAC complex including HDAC1, HDAC2, RBBP4, RBPP7, MTA1 and MTA2. Interacts with CCNQ. Interacts with NSD2 (via PHD-type zinc fingers 1, 2 and 3). Expressed in the metanephric mesenchyme surrounding ureteric bud.

Its subcellular location is the nucleus. Functionally, transcriptional repressor involved in organogenesis. Plays an essential role in ureteric bud invasion during kidney development. The protein is Sal-like protein 1 (Sall1) of Mus musculus (Mouse).